The chain runs to 62 residues: Probable tautomerase RSc0807 (62 aa).

The Proton acceptor; via imino nitrogen role is filled by P2.

Belongs to the 4-oxalocrotonate tautomerase family.

In Ralstonia nicotianae (strain ATCC BAA-1114 / GMI1000) (Ralstonia solanacearum), this protein is Probable tautomerase RSc0807.